The sequence spans 378 residues: N-acetyllactosaminide beta-1,3-N-acetylglucosaminyltransferase 4 (378 aa).

Over 1 to 28 the chain is Cytoplasmic; that stretch reads MLPPQPSAAHQGRGGRSGLLPKGPAMLC. The helical; Signal-anchor for type II membrane protein transmembrane segment at 29-49 threads the bilayer; sequence RLCWLVSYSLAVLLLGCLLFL. Residues 50–378 lie on the Lumenal side of the membrane; the sequence is RKAAKPAGDP…KCAAGPIPQR (329 aa). Residues 59–81 form a disordered region; it reads PTAHQPFWAPPTPRHSRCPPNHT. An N-linked (GlcNAc...) asparagine glycan is attached at asparagine 192.

This sequence belongs to the glycosyltransferase 31 family. In terms of tissue distribution, mainly expressed in brain tissues such as whole brain, hippocampus, amygdala, cerebellum and caudate nucleus. Also expressed in colon, esophagus and kidney.

The protein localises to the golgi apparatus membrane. It catalyses the reaction a beta-D-galactosyl-(1-&gt;4)-N-acetyl-beta-D-glucosaminyl derivative + UDP-N-acetyl-alpha-D-glucosamine = an N-acetyl-beta-D-glucosaminyl-(1-&gt;3)-beta-D-galactosyl-(1-&gt;4)-N-acetyl-beta-D-glucosaminyl derivative + UDP + H(+). It participates in protein modification; protein glycosylation. Functionally, beta-1,3-N-acetylglucosaminyltransferase involved in the synthesis of poly-N-acetyllactosamine. Has activity for type 2 oligosaccharides. The chain is N-acetyllactosaminide beta-1,3-N-acetylglucosaminyltransferase 4 (B3GNT4) from Homo sapiens (Human).